The sequence spans 223 residues: Ribonuclease S-2 (223 aa).

The signal sequence occupies residues 1 to 22 (MAKSQLVSALFVFFFSLSPIYG). Residues Cys-38 and Cys-44 are joined by a disulfide bond. N-linked (GlcNAc...) asparagine glycosylation is present at Asn-51. His-55 (proton donor) is an active-site residue. RNA-binding positions include His-55 and 94–95 (QL). 3 disulfide bridges follow: Cys-71–Cys-119, Cys-178–Cys-211, and Cys-194–Cys-205. Gln-112 is a catalytic residue. 115 to 116 (KH) is an RNA binding site. Residue His-116 is the Proton acceptor of the active site.

It belongs to the RNase T2 family. In terms of tissue distribution, pistil.

The protein localises to the secreted. It is found in the extracellular space. It carries out the reaction a ribonucleotidyl-ribonucleotide-RNA + H2O = a 3'-end 3'-phospho-ribonucleotide-RNA + a 5'-end dephospho-ribonucleoside-RNA + H(+). Self-incompatibility (SI) is the inherited ability of a flowering plant to prevent self-fertilization by discriminating between self and non-self pollen during pollination. In many species of the Solanaceae, self-incompatibility is controlled by the single, multiallelic locus S. This stylar glycoprotein is associated with expression of self-incompatibility in potato. This is Ribonuclease S-2 from Solanum tuberosum (Potato).